The sequence spans 539 residues: GMP synthase [glutamine-hydrolyzing] (539 aa).

The Glutamine amidotransferase type-1 domain maps to 4–202 (KILILDFGSQ…VLDIAGAKPD (199 aa)). C81 functions as the Nucleophile in the catalytic mechanism. Active-site residues include H176 and E178. One can recognise a GMPS ATP-PPase domain in the interval 203-395 (WIMRDHIEEA…LGLPAEMVYR (193 aa)). 230-236 (SGGVDSS) is a binding site for ATP.

In terms of assembly, homodimer.

The enzyme catalyses XMP + L-glutamine + ATP + H2O = GMP + L-glutamate + AMP + diphosphate + 2 H(+). Its pathway is purine metabolism; GMP biosynthesis; GMP from XMP (L-Gln route): step 1/1. Functionally, catalyzes the synthesis of GMP from XMP. The protein is GMP synthase [glutamine-hydrolyzing] of Burkholderia pseudomallei (strain 1106a).